Here is a 246-residue protein sequence, read N- to C-terminus: Polyhedrin (246 aa).

Belongs to the polyhedrin family.

In terms of biological role, major component of the virus occlusion bodies, which are large proteinaceous structures (polyhedra), that protect the virus from the outside environment for extended periods until they are ingested by insect larvae. The chain is Polyhedrin (PH) from Lepidoptera (butterflies and moths).